The following is a 300-amino-acid chain: Jacalin-related lectin 33 (300 aa).

A disordered region spans residues 1–20 (MAQKVEAGGGAGGASWDDGV). Residue A2 is modified to N-acetylalanine. 2 consecutive Jacalin-type lectin domains span residues 2-146 (AQKV…YFAT) and 154-297 (AKKL…HVMP).

This sequence belongs to the jacalin lectin family. As to quaternary structure, component of the PYK10 complex, at least composed of PYK10/BGLU23, BGLU21, BGLU22, JAL22, JAL23, PBP1/JAL30, PBP2/JAL31, JAL32, JAL33, JAL34, JAL35, GLL22 and GLL23.

In terms of biological role, sugar-binding protein showing significant affinity for (Glc alpha(1-4)Glc)(3) maltohexaose, (Glc alpha(1-6)Glc)(3) isomaltohexaose, Gal alpha(1-4)Gal beta(1-4)Glc, GalNAc alpha(1-3)(Fuc alpha(1-2)) and Gal beta(1-3)(Fuc alpha(1-4))GlcNAc beta(1-3)Gal beta(1-4)Glc. The chain is Jacalin-related lectin 33 (JAL33) from Arabidopsis thaliana (Mouse-ear cress).